The following is a 453-amino-acid chain: Carbamoyl phosphate synthase arginine-specific small chain (453 aa).

A mitochondrion-targeting transit peptide spans M1 to A13. The Glutamine amidotransferase type-1 domain occupies H233–A420. C309 functions as the Nucleophile in the catalytic mechanism. Active-site residues include H393 and E395.

This sequence belongs to the CarA family. As to quaternary structure, heterodimer composed of 2 chains; the small (or glutamine) chain promotes the hydrolysis of glutamine to ammonia, which is used by the large (or ammonia) chain to synthesize carbamoyl phosphate.

The protein resides in the mitochondrion matrix. It carries out the reaction hydrogencarbonate + L-glutamine + 2 ATP + H2O = carbamoyl phosphate + L-glutamate + 2 ADP + phosphate + 2 H(+). The enzyme catalyses L-glutamine + H2O = L-glutamate + NH4(+). Its pathway is amino-acid biosynthesis; L-arginine biosynthesis; carbamoyl phosphate from bicarbonate: step 1/1. In terms of biological role, small subunit of the arginine-specific carbamoyl phosphate synthase (CPSase). CPSase catalyzes the formation of carbamoyl phosphate from the ammonia moiety of glutamine, carbonate, and phosphate donated by ATP, the first step of the arginine biosynthetic pathway. The small subunit (glutamine amidotransferase) binds and cleaves glutamine to supply the large subunit with the substrate ammonia. This chain is Carbamoyl phosphate synthase arginine-specific small chain (cpa1), found in Hypocrea virens (Gliocladium virens).